A 170-amino-acid polypeptide reads, in one-letter code: Cysteine-rich uncharacterized protein 241L (170 aa).

This is Cysteine-rich uncharacterized protein 241L from Acheta domesticus (House cricket).